The chain runs to 156 residues: Small ribosomal subunit protein uS7 (156 aa).

The protein belongs to the universal ribosomal protein uS7 family. Part of the 30S ribosomal subunit. Contacts proteins S9 and S11.

One of the primary rRNA binding proteins, it binds directly to 16S rRNA where it nucleates assembly of the head domain of the 30S subunit. Is located at the subunit interface close to the decoding center, probably blocks exit of the E-site tRNA. In Rhizobium etli (strain ATCC 51251 / DSM 11541 / JCM 21823 / NBRC 15573 / CFN 42), this protein is Small ribosomal subunit protein uS7.